A 499-amino-acid polypeptide reads, in one-letter code: Apolipoprotein N-acyltransferase (499 aa).

6 helical membrane-spanning segments follow: residues 17-37 (VLAG…ALAL), 38-58 (LWSA…AVLL), 84-104 (ASIW…WAWL), 131-151 (IWGL…GVGG), 163-183 (LARW…GWWL), and 198-218 (RSLL…WSLL). The 227-residue stretch at 232–458 (WQPAIPTRSK…EGVGLADLHF (227 aa)) folds into the CN hydrolase domain. Glu273 functions as the Proton acceptor in the catalytic mechanism. The active site involves Lys322. The active-site Nucleophile is Cys370. Residues 474-494 (IGLMLFAVVGLGLSRVRSWLI) form a helical membrane-spanning segment.

It belongs to the CN hydrolase family. Apolipoprotein N-acyltransferase subfamily.

Its subcellular location is the cell inner membrane. It catalyses the reaction N-terminal S-1,2-diacyl-sn-glyceryl-L-cysteinyl-[lipoprotein] + a glycerophospholipid = N-acyl-S-1,2-diacyl-sn-glyceryl-L-cysteinyl-[lipoprotein] + a 2-acyl-sn-glycero-3-phospholipid + H(+). Its pathway is protein modification; lipoprotein biosynthesis (N-acyl transfer). Catalyzes the phospholipid dependent N-acylation of the N-terminal cysteine of apolipoprotein, the last step in lipoprotein maturation. The polypeptide is Apolipoprotein N-acyltransferase (Prochlorococcus marinus (strain MIT 9313)).